A 759-amino-acid polypeptide reads, in one-letter code: Catalase-peroxidase (759 aa).

The tract at residues 1–24 (MTQDKCPFKEQPSQPNFAGGGTSN) is disordered. The tryptophyl-tyrosyl-methioninium (Trp-Tyr) (with M-268) cross-link spans 96–242 (WHSAGTYRVF…LAAAHMGLIY (147 aa)). His97 (proton acceptor) is an active-site residue. Residues 242–268 (YVNPEGPDGNPDPIAAAHDIRDTFGRM) constitute a cross-link (tryptophyl-tyrosyl-methioninium (Tyr-Met) (with W-96)). His283 provides a ligand contact to heme b.

It belongs to the peroxidase family. Peroxidase/catalase subfamily. As to quaternary structure, homodimer or homotetramer. Heme b serves as cofactor. Formation of the three residue Trp-Tyr-Met cross-link is important for the catalase, but not the peroxidase activity of the enzyme.

It localises to the cytoplasm. The catalysed reaction is H2O2 + AH2 = A + 2 H2O. It carries out the reaction 2 H2O2 = O2 + 2 H2O. Functionally, bifunctional enzyme with both catalase and broad-spectrum peroxidase activity. In Neosartorya fischeri (strain ATCC 1020 / DSM 3700 / CBS 544.65 / FGSC A1164 / JCM 1740 / NRRL 181 / WB 181) (Aspergillus fischerianus), this protein is Catalase-peroxidase.